A 93-amino-acid chain; its full sequence is Microcin N immunity protein (93 aa).

3 helical membrane passes run Phe-3–Trp-23, Leu-36–Ile-56, and Leu-68–Leu-88.

The protein belongs to the MceB microcin immunity protein family.

It is found in the cell inner membrane. Probably able to protect the producing cell against microcin N (microcin 24). The chain is Microcin N immunity protein from Escherichia coli.